The chain runs to 371 residues: Geranylgeranyl pyrophosphate synthase paxG (371 aa).

Isopentenyl diphosphate contacts are provided by lysine 89, arginine 92, and histidine 121. Aspartate 128 and aspartate 132 together coordinate Mg(2+). Dimethylallyl diphosphate is bound at residue arginine 137. Arginine 138 contacts isopentenyl diphosphate. Dimethylallyl diphosphate is bound by residues lysine 215, threonine 216, and glutamine 249. Aspartate 252 is a Mg(2+) binding site. Asparagine 256, lysine 266, and lysine 276 together coordinate dimethylallyl diphosphate. The short motif at 369–371 (GRV) is the Peroxisomal targeting signal element.

This sequence belongs to the FPP/GGPP synthase family. The cofactor is Mg(2+).

The protein resides in the peroxisome. It catalyses the reaction isopentenyl diphosphate + dimethylallyl diphosphate = (2E)-geranyl diphosphate + diphosphate. The catalysed reaction is isopentenyl diphosphate + (2E)-geranyl diphosphate = (2E,6E)-farnesyl diphosphate + diphosphate. It carries out the reaction isopentenyl diphosphate + (2E,6E)-farnesyl diphosphate = (2E,6E,10E)-geranylgeranyl diphosphate + diphosphate. It participates in secondary metabolite biosynthesis. Geranylgeranyl pyrophosphate synthase; part of the gene cluster that mediates the biosynthesis of paxilline, a mycotoxin that acts as an inhibitor of mammalian maxi-K channels. PaxG, the geranylgeranyl diphosphate (GGPP) synthase is proposed to catalyze the first step in paxilline biosynthesis. Condensation of indole-3-glycerol phosphate with GGPP by paxC then forms 3-geranylgeranylindole (3-GGI), followed by epoxidation and cyclization of this intermediate (by paxM and paxB) to form paspaline. Paspaline is subsequently converted to 13-desoxypaxilline by paxP, the latter being then converted to paxilline by paxQ. Finally paxilline can be mono- and di-prenylated by paxD. This chain is Geranylgeranyl pyrophosphate synthase paxG, found in Penicillium paxilli.